A 209-amino-acid chain; its full sequence is Dual specificity protein phosphatase 22 (209 aa).

A Tyrosine-protein phosphatase domain is found at 4-144 (GMNKILTGLF…LEDFGKCEVH (141 aa)). The active-site Phosphocysteine intermediate is Cys88. The segment at 169-192 (LDKHKQQEAAESQNATSSGRQWNS) is disordered. Over residues 177–190 (AAESQNATSSGRQW) the composition is skewed to polar residues.

It belongs to the protein-tyrosine phosphatase family. Non-receptor class dual specificity subfamily.

It localises to the cytoplasm. Its subcellular location is the nucleus. It carries out the reaction O-phospho-L-tyrosyl-[protein] + H2O = L-tyrosyl-[protein] + phosphate. The catalysed reaction is O-phospho-L-seryl-[protein] + H2O = L-seryl-[protein] + phosphate. The enzyme catalyses O-phospho-L-threonyl-[protein] + H2O = L-threonyl-[protein] + phosphate. Functionally, activates the Jnk signaling pathway. Dephosphorylates and deactivates p38 and stress-activated protein kinase/c-Jun N-terminal kinase (SAPK/JNK). The polypeptide is Dual specificity protein phosphatase 22 (dusp22) (Xenopus laevis (African clawed frog)).